The sequence spans 311 residues: Porphobilinogen deaminase (311 aa).

An S-(dipyrrolylmethanemethyl)cysteine modification is found at C243.

Belongs to the HMBS family. Monomer. Dipyrromethane serves as cofactor.

It carries out the reaction 4 porphobilinogen + H2O = hydroxymethylbilane + 4 NH4(+). It functions in the pathway porphyrin-containing compound metabolism; protoporphyrin-IX biosynthesis; coproporphyrinogen-III from 5-aminolevulinate: step 2/4. Tetrapolymerization of the monopyrrole PBG into the hydroxymethylbilane pre-uroporphyrinogen in several discrete steps. The chain is Porphobilinogen deaminase from Blochmanniella floridana.